The primary structure comprises 997 residues: Protein translocase subunit SecA (997 aa).

ATP contacts are provided by residues Q84, 102–106 (GEGKT), and D582. The disordered stretch occupies residues 950–997 (PYVPVPEAKPEPSEVFGVERKRATPPPQPGLSRAERRRLMRQEKKRKK). Over residues 957 to 971 (AKPEPSEVFGVERKR) the composition is skewed to basic and acidic residues. A compositionally biased stretch (basic residues) spans 984 to 997 (ERRRLMRQEKKRKK).

Belongs to the SecA family. In terms of assembly, part of the essential Sec protein translocation apparatus which comprises SecA, SecYEG and auxiliary proteins SecDF. Other proteins may also be involved. Monomer and homodimer.

The protein localises to the cell inner membrane. The protein resides in the cytoplasm. It catalyses the reaction ATP + H2O + cellular proteinSide 1 = ADP + phosphate + cellular proteinSide 2.. Functionally, part of the Sec protein translocase complex. Interacts with the SecYEG preprotein conducting channel. Has a central role in coupling the hydrolysis of ATP to the transfer of proteins into and across the cell membrane, serving as an ATP-driven molecular motor driving the stepwise translocation of polypeptide chains across the membrane. The protein is Protein translocase subunit SecA of Thermus thermophilus (strain ATCC 27634 / DSM 579 / HB8).